Here is a 247-residue protein sequence, read N- to C-terminus: MAATSDEQMNLLLSSFDQIYEDFKIGLNEINVYRSKSNVESSRREVLEISNKNLKEENERLKKLYTESLNNFADQLEHRTKCHSLKEELKRVNDENKSKEHEHRNALESLRQKHVTKVEELEYKIRSLLVEKATNDMVIDRLRQDLTANKSHIQAMSKKLDRVVTEVECKYELEIQDLKDCLLMEQAEKNDISNKLQSLQKELLISRTSIAEKQRDTTSNRQVETLKQKLMKLRKENEILKRKLSSS.

Coiled-coil stretches lie at residues 39-126 (VESS…YKIR) and 182-247 (LLME…LSSS).

As to quaternary structure, interacts with viral tomato spotted wilt virus (TSWV) movement protein NSM, which is involved in cell-to cell spread of viral genome and enlargement of the host plasmodesmata size exclusion limit (SEL). Expressed in leaves (at protein level).

It localises to the endoplasmic reticulum. The protein resides in the cell junction. Its subcellular location is the plasmodesma. Its function is as follows. Involved in intra- and inter-cellular trafficking through plasmodesmata (PD). The polypeptide is Protein At-4/1 (Arabidopsis thaliana (Mouse-ear cress)).